Reading from the N-terminus, the 61-residue chain is Large ribosomal subunit protein bL28 (61 aa).

Residues 1–26 (MAKDFVTGRKTTFGKKRSHALNQTNR) form a disordered region.

The protein belongs to the bacterial ribosomal protein bL28 family.

This Ligilactobacillus salivarius (strain UCC118) (Lactobacillus salivarius) protein is Large ribosomal subunit protein bL28.